The sequence spans 972 residues: Structural polyprotein (972 aa).

Residue aspartate 26 coordinates a divalent metal cation. The 226-residue stretch at 509–734 folds into the Peptidase S50 domain; sequence SGSEAGSYSK…YLGQLMRTTA (226 aa). The active-site Nucleophile is the serine 633. Lysine 674 is an active-site residue. 2 disordered regions span residues 797-817 and 917-972; these read STPPKHQEKPKGPDQHTAQEA and GGRG…DGEV. The span at 801–817 shows a compositional bias: basic and acidic residues; sequence KHQEKPKGPDQHTAQEA.

Homotrimer. A central divalent metal (possibly cobalt) stabilizes the VP2 trimer. In terms of assembly, homodimer. interacts (via C-terminus) with VP1 in the cytoplasm. Interacts with VP2. Post-translationally, specific enzymatic cleavages yield mature proteins. Capsid assembly seems to be regulated by polyprotein processing. The protease VP4 cleaves itself off the polyprotein, thus releasing pre-VP2 and VP3 within the infected cell. During capsid assembly, the C-terminus of pre-VP2 is further processed by VP4, giving rise to VP2, the external capsid protein and three small peptides that all stay closely associated with the capsid.

It localises to the virion. Its subcellular location is the host cytoplasm. Capsid protein VP2 self assembles to form an icosahedral capsid with a T=13 symmetry, about 70 nm in diameter, and consisting of 260 VP2 trimers. The capsid encapsulates the genomic dsRNA. VP2 is also involved in attachment and entry into the host cell. Functionally, the precursor of VP2 plays an important role in capsid assembly. First, pre-VP2 and VP2 oligomers assemble to form a procapsid. Then, the pre-VP2 intermediates may be processed into VP2 proteins by proteolytic cleavage mediated by VP4 to obtain the mature virion. The final capsid is composed of pentamers and hexamers but VP2 has a natural tendency to assemble into all-pentameric structures. Therefore pre-VP2 may be required to allow formation of the hexameric structures. Its function is as follows. Protease VP4 is a serine protease that cleaves the polyprotein into its final products. Pre-VP2 is first partially cleaved, and may be completely processed by VP4 upon capsid maturation. In terms of biological role, capsid protein VP3 plays a key role in virion assembly by providing a scaffold for the capsid composed of VP2. May self-assemble to form a T=4-like icosahedral inner-capsid composed of at least 180 trimers. Plays a role in genomic RNA packaging by recruiting VP1 into the capsid and interacting with the dsRNA genome segments to form a ribonucleoprotein complex. Additionally, the interaction of the VP3 C-terminal tail with VP1 removes the inherent structural blockade of the polymerase active site. Thus, VP3 can also function as a transcriptional activator. Structural peptide 1 is a small peptide derived from the C-terminus of pre-VP2. It destabilizes and perforates cell membranes, suggesting a role during viral entry. Functionally, structural peptide 2 is a small peptide derived from the C-terminus of pre-VP2. It is not essential for virus viability, but viral growth is affected when this protein is absent. Its function is as follows. Structural peptide 3 is a small peptide derived from pre-VP2 C-terminus. It is not essential for virus viability, but viral growth is affected when this protein is absent. This chain is Structural polyprotein, found in Oncorhynchus mykiss (Rainbow trout).